We begin with the raw amino-acid sequence, 443 residues long: Histidine--tRNA ligase (443 aa).

Residues methionine 1–lysine 20 are compositionally biased toward basic and acidic residues. The segment at methionine 1 to alanine 21 is disordered.

The protein belongs to the class-II aminoacyl-tRNA synthetase family. Homodimer.

Its subcellular location is the cytoplasm. It carries out the reaction tRNA(His) + L-histidine + ATP = L-histidyl-tRNA(His) + AMP + diphosphate + H(+). This Corynebacterium jeikeium (strain K411) protein is Histidine--tRNA ligase.